A 579-amino-acid polypeptide reads, in one-letter code: Insulin-like growth factor 2 mRNA-binding protein 3 (579 aa).

RRM domains lie at 2–75 and 81–156; these read NKLY…HSVP and RKLQ…YIPD. Positions 160–192 are disordered; it reads AQQNPLQQPRGRRGLGQRGSSRQGSPGSVSKQK. Low complexity predominate over residues 177-187; sequence RGSSRQGSPGS. A Phosphoserine modification is found at S184. 3 KH domains span residues 195-260, 276-343, and 405-470; these read DLPL…CKSI, EIPL…EEEI, and TETV…QGRI. Glycyl lysine isopeptide (Lys-Gly) (interchain with G-Cter in SUMO2) cross-links involve residues K450 and K475. The 67-residue stretch at 487–553 folds into the KH 4 domain; it reads KLEAHIRVPS…YACQVAQRKI (67 aa). At T528 the chain carries Phosphothreonine.

This sequence belongs to the RRM IMP/VICKZ family. In terms of assembly, can form homooligomers and heterooligomers with IGF2BP1 and IGF2BP3 in an RNA-dependent manner. Interacts with IGF2BP1. Interacts with ELAVL1, DHX9, HNRNPU, MATR3 and PABPC1. As to expression, expressed in fetal liver, fetal lung, fetal kidney, fetal thymus, fetal placenta, fetal follicles of ovary and gonocytes of testis, growing oocytes, spermatogonia and semen (at protein level). Expressed in cervix adenocarcinoma, in testicular, pancreatic and renal-cell carcinomas (at protein level). Expressed ubiquitously during fetal development at 8 and 14 weeks of gestation. Expressed in ovary, testis, brain, placenta, pancreatic cancer tissues and pancreatic cancer cell lines.

The protein resides in the nucleus. It localises to the cytoplasm. The protein localises to the P-body. Its subcellular location is the stress granule. RNA-binding factor that may recruit target transcripts to cytoplasmic protein-RNA complexes (mRNPs). This transcript 'caging' into mRNPs allows mRNA transport and transient storage. It also modulates the rate and location at which target transcripts encounter the translational apparatus and shields them from endonuclease attacks or microRNA-mediated degradation. Preferentially binds to N6-methyladenosine (m6A)-containing mRNAs and increases their stability. Binds to the 3'-UTR of CD44 mRNA and stabilizes it, hence promotes cell adhesion and invadopodia formation in cancer cells. Binds to beta-actin/ACTB and MYC transcripts. Increases MYC mRNA stability by binding to the coding region instability determinant (CRD) and binding is enhanced by m6A-modification of the CRD. Binds to the 5'-UTR of the insulin-like growth factor 2 (IGF2) mRNAs. The sequence is that of Insulin-like growth factor 2 mRNA-binding protein 3 (IGF2BP3) from Homo sapiens (Human).